The chain runs to 386 residues: Beta-citrylglutamate synthase B (386 aa).

In terms of domain architecture, ATP-grasp spans 119 to 304; that stretch reads FQELAGHGVP…VAGIIADYAA (186 aa). ATP is bound by residues Lys-158, 193-203, and Arg-219; that span reads QKYVKESHGRD. Residues Asp-264, Glu-277, and Asn-279 each contribute to the Mg(2+) site. Mn(2+) is bound by residues Asp-264, Glu-277, and Asn-279. Residues 325-359 form a disordered region; the sequence is ASETSEPELGPPASTAVDNMSASSSSVDSDPESTE. Residues 338–352 are compositionally biased toward low complexity; it reads STAVDNMSASSSSVD.

This sequence belongs to the RimK family. Mg(2+) is required as a cofactor. It depends on Mn(2+) as a cofactor.

It is found in the cytoplasm. The catalysed reaction is citrate + L-glutamate + ATP = beta-citrylglutamate + ADP + phosphate + H(+). The enzyme catalyses N-acetyl-L-aspartate + L-glutamate + ATP = N-acetyl-L-aspartyl-L-glutamate + ADP + phosphate + H(+). In terms of biological role, catalyzes the synthesis of beta-citryl-L-glutamate and N-acetyl-L-aspartyl-L-glutamate. Beta-citryl-L-glutamate is synthesized more efficiently than N-acetyl-L-aspartyl-L-glutamate. This is Beta-citrylglutamate synthase B (RIMKLB) from Homo sapiens (Human).